Here is a 21-residue protein sequence, read N- to C-terminus: Bibrotoxin (21 aa).

Disulfide bonds link C1-C15 and C3-C11.

Belongs to the endothelin/sarafotoxin family. In terms of tissue distribution, expressed by the venom gland.

It localises to the secreted. Vasoconstrictor activity. These toxins cause cardiac arrest probably as a result of coronary vasospasm. May act by displaying agonistic activities towards endothelin-1 and -2 receptors (EDNRA and EDNRB). The polypeptide is Bibrotoxin (Atractaspis bibronii (Bibron's mole viper)).